Reading from the N-terminus, the 235-residue chain is Transmembrane emp24 domain-containing protein 9 (235 aa).

An N-terminal signal peptide occupies residues 1–37 (MAAERSLWVVGLCPGSRLGRVVRVLLLLLWFAARGGA). Over 38 to 201 (LYFHIGETEK…FRQTSESTNQ (164 aa)) the chain is Lumenal. Residues 47–145 (KKCFIEEIPD…MLRVHLDIQV (99 aa)) form the GOLD domain. The segment at 121 to 160 (CLHSNSTKFSLFAGGMLRVHLDIQVGEHANDYAEIAAKDK) is required for interaction with STX17. N-linked (GlcNAc...) asparagine glycosylation occurs at N125. A coiled-coil region spans residues 154–184 (EIAAKDKLSELQLRVRQLVEQVEQIQKEQNY). K160 bears the N6-acetyllysine mark. A helical transmembrane segment spans residues 202–222 (RVLWWSILQTLILVAIGVWQM). Residues 223 to 235 (RHLKSFFEAKKLV) lie on the Cytoplasmic side of the membrane. Residues 228-229 (FF) carry the COPII vesicle coat-binding motif. The COPI vesicle coat-binding signature appears at 228-235 (FFEAKKLV).

The protein belongs to the EMP24/GP25L family. As to quaternary structure, monomer and homodimer in endoplasmic reticulum. Predominantly monomeric and to lesser extent homodimeric in endoplasmic reticulum-Golgi intermediate compartment and cis-Golgi network. Probably oligomerizes with other members of the EMP24/GP25L family such as TMED2, TMED7 and TMED10. Interacts with TMED5. Interacts (via C-terminus) with COPG1; the interaction involves dimeric TMED9. Interacts with PTPN2 and SPAST. Interacts with STX17; the interaction is direct. Post-translationally, N-linked glycosylated containing high mannose.

Its subcellular location is the endoplasmic reticulum membrane. It is found in the golgi apparatus. It localises to the cis-Golgi network membrane. The protein resides in the endoplasmic reticulum-Golgi intermediate compartment membrane. The protein localises to the trans-Golgi network membrane. Appears to be involved in vesicular protein trafficking, mainly in the early secretory pathway. In COPI vesicle-mediated retrograde transport involved in the coatomer recruitment to membranes of the early secretory pathway. Increases coatomer-dependent activity of ARFGAP2. Thought to play a crucial role in the specific retention of p24 complexes in cis-Golgi membranes; specifically contributes to the coupled localization of TMED2 and TMED10 in the cis-Golgi network. May be involved in organization of intracellular membranes, such as of the ER-Golgi intermediate compartment and the Golgi apparatus. Involved in ER localization of PTPN2. This is Transmembrane emp24 domain-containing protein 9 (TMED9) from Bos taurus (Bovine).